Reading from the N-terminus, the 124-residue chain is Glutaredoxin-2 (124 aa).

Cys-13 and Cys-16 form a disulfide bridge.

The protein belongs to the glutaredoxin family. In terms of assembly, homodimer.

The protein resides in the host cytoplasm. Its function is as follows. Glutaredoxin necessary for virion morphogenesis and virus replication. Functions as a thiol-disulfide transfer protein between membrane-associated OPG128 and substrates OPG095 or OPG053. The complete pathway for formation of disulfide bonds in intracellular virion membrane proteins sequentially involves oxidation of OPG072, OPG128 and OPG088. Exhibit thioltransferase and dehydroascorbate reductase activities in vitro. This Homo sapiens (Human) protein is Glutaredoxin-2 (OPG088).